Consider the following 413-residue polypeptide: Na(+)/H(+) antiporter NhaA (413 aa).

11 consecutive transmembrane segments (helical) span residues 15 to 35 (LESG…ALFV), 57 to 77 (LLHW…GLEI), 93 to 113 (ALPC…YASL), 123 to 143 (GWAI…SLLG), 152 to 172 (IFLA…IAVF), 175 to 195 (AELN…LLGF), 211 to 231 (VALW…GVVL), 261 to 281 (WVAF…SFAG), 295 to 315 (VALG…WLAI), 333 to 353 (GVSL…LLAF), and 364 to 384 (VGVL…LSLT).

It belongs to the NhaA Na(+)/H(+) (TC 2.A.33) antiporter family.

The protein resides in the cell inner membrane. The catalysed reaction is Na(+)(in) + 2 H(+)(out) = Na(+)(out) + 2 H(+)(in). Its function is as follows. Na(+)/H(+) antiporter that extrudes sodium in exchange for external protons. This chain is Na(+)/H(+) antiporter NhaA, found in Caulobacter vibrioides (strain ATCC 19089 / CIP 103742 / CB 15) (Caulobacter crescentus).